The chain runs to 877 residues: MKSSYGSSSNDLHAFVNEIKGEIQLSNINLDPYSFVSPSAYDTAWLSMIEEDINVDDNELKPMFQGCLDWIMCNQNAREGFWMNSTSYTTVADGRDEDGEKDMCILTSTLACVVALQKWNIGCFHLHKGTRYIERNTEMIIGKYINEEGSYPRWFAIKFTGILELAQKLGLHFVFSSRCIEMIKGMFYQRQEIIQREKLVHDCNYKPLLAYLEVLPSKLYVTNQEDIIVKSLDSMDGSLFQSPSATASAFMLTRNTKCLAYLQNLVQKCPNGVPQKYPLNEDLIKLSMVNLIESTGLGEFFGIEIEHVLEQVYSRYEEKDFERMPMSYLADQLHKDSLAFRMLRMHGRDVSPRSFCWFLNDQETRNHLERNIDSFLLVILSVYRATDLMFPGEHDLQEAREYTRNLLEKRRSIKEKMIMHELSTPWIARLKHLDHRMWIEDKNSNVLSMEKASFLRLHSSYSDKLTHLAARNFEFQQAKYCRELEELTMWVKKWGLSDIGFGREKTTYCYFATVTSLPYEYAIKFGKLAAKTAILITIADDFFDEKGSFNDLEGLTKAVLRWEGEELKSYGNIIFRALDDIVRETANTCRTHHKTDIIVHLRNIWGETFESWLREAEWSKKGHTSSMDEYIRNGMISIAAHTIALSISCLMEPCFPHNKLKPGNYDSITTLLMIIPRLLNDLQSYQKEQEQGKMNSVLLHMKNHPGLEIEDSIAHIEKIIDSKRKEFLEHVLVDGLSDLPKPCKEIHMSCCKVFEMFFNKKNRYDSNTEMLHDIKKALYDPINVYELSEMEPMPLMAHGDEYMILPLLLNSLPNILEFKRKDGYGAMKTSMCFGRSYRVNKRVMASQLDDQHKPLKIVASQRKPVPMMQSIFAPCFY.

The Mg(2+) site is built by aspartate 540 and aspartate 544. Substrate-binding residues include aspartate 540, aspartate 544, arginine 677, and asparagine 680. Positions 540–544 (DDFFD) match the DDXXD motif motif. The Mg(2+) site is built by asparagine 680, serine 684, and glutamate 688.

This sequence belongs to the terpene synthase family. Tpsf subfamily. Requires Mg(2+) as cofactor. Mn(2+) is required as a cofactor. As to expression, expressed in leaves and flowers.

It is found in the cytoplasm. The catalysed reaction is (2E,6E,10E)-geranylgeranyl diphosphate + H2O = (6E,10E)-geranyllinalool + diphosphate. It functions in the pathway secondary metabolite biosynthesis; terpenoid biosynthesis. Functionally, involved in the biosynthesis of homoterpenes, attractants of herbivores parasitoids and predators (e.g. predatory mites and parasitoid wasps). Involved in diterpene (C20) biosynthesis. Catalyzes the conversion of geranylgeranyl diphosphate to (E,E)-geranyllinalool, the precursor of the insect-induced volatile C16-homoterpene TMTT. The polypeptide is (E,E)-geranyllinalool synthase (Arabidopsis thaliana (Mouse-ear cress)).